Reading from the N-terminus, the 236-residue chain is Kinetochore protein Spc25 (236 aa).

Positions 44–106 form a coiled coil; sequence KNIISAKEAI…DMEAQLLRHT (63 aa). A disordered region spans residues 194 to 217; it reads EVAGASPVTPSGSERPKATSKHSN.

Belongs to the SPC25 family. In terms of assembly, component of the Ndc80 complex, which is composed of Ndc80, Nuf2 and Spc25.

The protein localises to the nucleus. It is found in the chromosome. It localises to the centromere. Its subcellular location is the kinetochore. Acts as a component of the essential kinetochore-associated Ndc80 complex, which is required for chromosome segregation and spindle checkpoint activity during meiosis and mitosis. Required for kinetochore integrity and the organization of stable microtubule binding sites in the outer plate of the kinetochore. Participates in SAC signaling that responds specifically to disruptions in spindle microtubule dynamics. The NDC80 complex synergistically enhances the affinity of the SKA1 complex for microtubules and may allow the NDC80 complex to track depolymerizing microtubules. This is Kinetochore protein Spc25 from Drosophila persimilis (Fruit fly).